The primary structure comprises 455 residues: Neuronal acetylcholine receptor subunit beta-3 (455 aa).

Residues M1–G20 form the signal peptide. Over S21–L229 the chain is Extracellular. N-linked (GlcNAc...) asparagine glycans are attached at residues N48 and N163. An intrachain disulfide couples C150 to C164. Transmembrane regions (helical) follow at residues P230–L254, L262–I279, and Y296–V317. The Cytoplasmic segment spans residues H318–R425. The chain crosses the membrane as a helical span at residues I426–T444.

Belongs to the ligand-gated ion channel (TC 1.A.9) family. Acetylcholine receptor (TC 1.A.9.1) subfamily. Beta-3/CHRNB3 sub-subfamily. Neuronal AChR seems to be composed of two different type of subunits: alpha and beta. CHRNB3/beta-3 subunit is only able to form functional nAChRs when co-assembled with another beta subunit. Participates in pentameric assemblies along with CHRNA4/alpha-4 and CHRNB2/beta-2 subunits and with CHRNA6/alpha-6 as well, forming stoichiometries such as (CHRNA3:CHRNB4)2:CHRNB3, (CHRNA4:CHRNB2)2:CHRNB3 or (CHRNA6:CHRNB2)2:CHRNB3. In terms of tissue distribution, relatively abundant in the developing retina and in the trigeminal ganglion.

The protein localises to the synaptic cell membrane. Its subcellular location is the cell membrane. The enzyme catalyses Ca(2+)(in) = Ca(2+)(out). It carries out the reaction K(+)(in) = K(+)(out). The catalysed reaction is Na(+)(in) = Na(+)(out). Its activity is regulated as follows. Activated by a myriad of ligands such as acetylcholine, cytisine, nicotine, choline and epibatidine. Component of neuronal acetylcholine receptors (nAChRs) that function as pentameric, ligand-gated cation channels with high calcium permeability among other activities. nAChRs are excitatory neurotrasnmitter receptors formed by a collection of nAChR subunits known to mediate synaptic transmission in the nervous system and the neuromuscular junction. Each nAchR subunit confers differential attributes to channel properties, including activation, deactivation and desensitization kinetics, pH sensitivity, cation permeability, and binding to allosteric modulators. Has an accessory rather than functional role and is only able to form functional nAChRs when co-assembled with another beta subunit. Participates in pentameric assemblies along with CHRNA3, CHRNA4, CHRNA6, CHRNB2 and CHRNB4. Modulates receptor assembly and increases receptor sensitivity to nicotine when associated with CHRNB2, CHRNA4 and/or CHRNA6 as well as CHRNA3 and CHRNB4. Seems to play a role in nicotine addiction. This chain is Neuronal acetylcholine receptor subunit beta-3 (CHRNB3), found in Gallus gallus (Chicken).